We begin with the raw amino-acid sequence, 478 residues long: Serralysin C (478 aa).

The propeptide occupies methionine 1–serine 17. Position 187 (histidine 187) interacts with Zn(2+). Residue glutamate 188 is part of the active site. Positions 191 and 227 each coordinate Zn(2+). Residues arginine 264, glycine 266, aspartate 296, glycine 298, glycine 299, aspartate 301, threonine 338, glutamate 340, glycine 345, glycine 347, aspartate 349, asparagine 354, alanine 356, asparagine 358, glycine 362, glycine 363, alanine 364, glycine 365, aspartate 367, glycine 371, glycine 372, glycine 374, aspartate 376, glycine 380, glycine 381, glycine 383, aspartate 385, aspartate 394, aspartate 401, and aspartate 411 each contribute to the Ca(2+) site. 2 Hemolysin-type calcium-binding repeats span residues isoleucine 343–leucine 360 and arginine 361–leucine 378.

Belongs to the peptidase M10B family. Ca(2+) is required as a cofactor. Zn(2+) serves as cofactor.

The protein localises to the secreted. The catalysed reaction is Preferential cleavage of bonds with hydrophobic residues in P1'.. This Dickeya chrysanthemi (Pectobacterium chrysanthemi) protein is Serralysin C (prtC).